The sequence spans 338 residues: MEMO1 family protein MHO1 (338 aa).

This sequence belongs to the MEMO1 family.

The protein resides in the cytoplasm. The protein localises to the nucleus. Its function is as follows. Plays a role in haploid invasive growth under conditions of nutrient insufficiency, suggesting that the function of the MEMO1 family in cell motility/invasion is conserved across species. In Saccharomyces cerevisiae (strain ATCC 204508 / S288c) (Baker's yeast), this protein is MEMO1 family protein MHO1.